Consider the following 468-residue polypeptide: UDP-glycosyltransferase 89B2 (468 aa).

UDP-alpha-D-glucose contacts are provided by residues Ser-287, Trp-347 to Val-348, His-365 to Glu-373, and Ser-387 to Gln-390.

It belongs to the UDP-glycosyltransferase family.

In terms of biological role, may glycosylate diterpenes or flavonols in leaves. This chain is UDP-glycosyltransferase 89B2, found in Stevia rebaudiana (Stevia).